Reading from the N-terminus, the 156-residue chain is Small ribosomal subunit protein uS7 (156 aa).

Belongs to the universal ribosomal protein uS7 family. In terms of assembly, part of the 30S ribosomal subunit. Contacts proteins S9 and S11.

One of the primary rRNA binding proteins, it binds directly to 16S rRNA where it nucleates assembly of the head domain of the 30S subunit. Is located at the subunit interface close to the decoding center, probably blocks exit of the E-site tRNA. In Synechococcus sp. (strain WH7803), this protein is Small ribosomal subunit protein uS7.